A 202-amino-acid chain; its full sequence is Dephospho-CoA kinase (202 aa).

Residues 4–202 enclose the DPCK domain; that stretch reads VIGLTGGIAT…TDKGFINKER (199 aa). 12-17 is a binding site for ATP; it reads ATGKST.

Belongs to the CoaE family.

It localises to the cytoplasm. It carries out the reaction 3'-dephospho-CoA + ATP = ADP + CoA + H(+). It functions in the pathway cofactor biosynthesis; coenzyme A biosynthesis; CoA from (R)-pantothenate: step 5/5. Its function is as follows. Catalyzes the phosphorylation of the 3'-hydroxyl group of dephosphocoenzyme A to form coenzyme A. This chain is Dephospho-CoA kinase, found in Staphylococcus haemolyticus (strain JCSC1435).